The following is a 284-amino-acid chain: Digeranylgeranylglyceryl phosphate synthase (284 aa).

The next 7 membrane-spanning stretches (helical) occupy residues 10–30, 37–57, 76–98, 102–119, 126–146, 217–237, and 260–280; these read IHNV…SSMW, LILA…INDV, AVSL…ILSA, YLQF…IFYA, GIYG…YGGL, LPLF…FLYI, and GSAF…QFLF.

It belongs to the UbiA prenyltransferase family. DGGGP synthase subfamily. It depends on Mg(2+) as a cofactor.

It localises to the cell membrane. It carries out the reaction sn-3-O-(geranylgeranyl)glycerol 1-phosphate + (2E,6E,10E)-geranylgeranyl diphosphate = 2,3-bis-O-(geranylgeranyl)-sn-glycerol 1-phosphate + diphosphate. Its pathway is membrane lipid metabolism; glycerophospholipid metabolism. Functionally, prenyltransferase that catalyzes the transfer of the geranylgeranyl moiety of geranylgeranyl diphosphate (GGPP) to the C2 hydroxyl of (S)-3-O-geranylgeranylglyceryl phosphate (GGGP). This reaction is the second ether-bond-formation step in the biosynthesis of archaeal membrane lipids. The chain is Digeranylgeranylglyceryl phosphate synthase from Metallosphaera sedula (strain ATCC 51363 / DSM 5348 / JCM 9185 / NBRC 15509 / TH2).